Reading from the N-terminus, the 340-residue chain is MGSINPPQILDIRRSKFEESIPKQVEAGLLSSPKTLPALLFYSTEGIQHWNRHSHASDFYPRHEEIQILKDKATDMAASIADGSVVVDLGSASLDKVIHLLEALEAAQKKVTYYALDLSFSELTSTLQAIPTDQFVHVQFSALHGTFDDGLQWLKETPVIRDQPHCLLLFGLTIGNFSRSNAAKFLHNIASHALVESPSQSSILLTLDSCKVPTKVTRAYTAEGVVPFALESLKYGNTLFQQDGGENVFDPEDWYFLSEWNYVLGRHEASLVPRSKDIKLGRPLDKIVVGKHEKVRFGCSYKYDSEERKELFGTAGLRDVKSWSKEGCDVAFYQLKCCPN.

Belongs to the methyltransferase superfamily. As to quaternary structure, homodimer.

The enzyme catalyses 4-(3-methylbut-2-enyl)-L-tryptophan + S-adenosyl-L-methionine = 4-(3-methylbut-2-enyl)-L-abrine + S-adenosyl-L-homocysteine + H(+). The protein operates within alkaloid biosynthesis; ergot alkaloid biosynthesis. Its function is as follows. 4-dimethylallyltryptophan N-methyltransferase; part of the gene cluster that mediates the biosynthesis of fungal ergot alkaloid. DmaW catalyzes the first step of ergot alkaloid biosynthesis by condensing dimethylallyl diphosphate (DMAP) and tryptophan to form 4-dimethylallyl-L-tryptophan. The second step is catalyzed by the methyltransferase easF that methylates 4-dimethylallyl-L-tryptophan in the presence of S-adenosyl-L-methionine, resulting in the formation of 4-dimethylallyl-L-abrine. The catalase easC and the FAD-dependent oxidoreductase easE then transform 4-dimethylallyl-L-abrine to chanoclavine-I which is further oxidized by easD in the presence of NAD(+), resulting in the formation of chanoclavine-I aldehyde. Chanoclavine-I aldehyde is the precursor of ergoamides and ergopeptines in Clavicipitaceae, and clavine-type alcaloids such as fumiclavine in Trichocomaceae. However, the metabolites downstream of chanoclavine-I aldehyde in Arthrodermataceae have not been identified yet. The chain is 4-dimethylallyltryptophan N-methyltransferase easF from Arthroderma benhamiae (strain ATCC MYA-4681 / CBS 112371) (Trichophyton mentagrophytes).